Reading from the N-terminus, the 247-residue chain is Elongation factor Ts (247 aa).

Residues 82–85 form an involved in Mg(2+) ion dislocation from EF-Tu region; the sequence is TDFV.

It belongs to the EF-Ts family.

It is found in the cytoplasm. Functionally, associates with the EF-Tu.GDP complex and induces the exchange of GDP to GTP. It remains bound to the aminoacyl-tRNA.EF-Tu.GTP complex up to the GTP hydrolysis stage on the ribosome. This chain is Elongation factor Ts (tsf), found in Arthrospira platensis (Spirulina platensis).